The primary structure comprises 230 residues: Large ribosomal subunit protein uL1 (230 aa).

This sequence belongs to the universal ribosomal protein uL1 family. In terms of assembly, part of the 50S ribosomal subunit.

Its function is as follows. Binds directly to 23S rRNA. The L1 stalk is quite mobile in the ribosome, and is involved in E site tRNA release. Protein L1 is also a translational repressor protein, it controls the translation of the L11 operon by binding to its mRNA. The sequence is that of Large ribosomal subunit protein uL1 from Leptospira borgpetersenii serovar Hardjo-bovis (strain JB197).